Consider the following 261-residue polypeptide: Hydroxyethylthiazole kinase (261 aa).

Residue methionine 38 participates in substrate binding. Positions 114 and 159 each coordinate ATP. Glycine 186 contacts substrate.

The protein belongs to the Thz kinase family. It depends on Mg(2+) as a cofactor.

The enzyme catalyses 5-(2-hydroxyethyl)-4-methylthiazole + ATP = 4-methyl-5-(2-phosphooxyethyl)-thiazole + ADP + H(+). It participates in cofactor biosynthesis; thiamine diphosphate biosynthesis; 4-methyl-5-(2-phosphoethyl)-thiazole from 5-(2-hydroxyethyl)-4-methylthiazole: step 1/1. In terms of biological role, catalyzes the phosphorylation of the hydroxyl group of 4-methyl-5-beta-hydroxyethylthiazole (THZ). The sequence is that of Hydroxyethylthiazole kinase from Halalkalibacterium halodurans (strain ATCC BAA-125 / DSM 18197 / FERM 7344 / JCM 9153 / C-125) (Bacillus halodurans).